A 343-amino-acid chain; its full sequence is Probable dual-specificity RNA methyltransferase RlmN (343 aa).

Glu91 (proton acceptor) is an active-site residue. The region spanning 97-326 (HPDRITACIS…AEIRREKGAD (230 aa)) is the Radical SAM core domain. Residues Cys104 and Cys331 are joined by a disulfide bond. Residues Cys111, Cys115, and Cys118 each coordinate [4Fe-4S] cluster. S-adenosyl-L-methionine contacts are provided by residues 158–159 (GE), Ser190, 213–215 (SLH), and Asn289. The active-site S-methylcysteine intermediate is Cys331.

Belongs to the radical SAM superfamily. RlmN family. It depends on [4Fe-4S] cluster as a cofactor.

It is found in the cytoplasm. The enzyme catalyses adenosine(2503) in 23S rRNA + 2 reduced [2Fe-2S]-[ferredoxin] + 2 S-adenosyl-L-methionine = 2-methyladenosine(2503) in 23S rRNA + 5'-deoxyadenosine + L-methionine + 2 oxidized [2Fe-2S]-[ferredoxin] + S-adenosyl-L-homocysteine. The catalysed reaction is adenosine(37) in tRNA + 2 reduced [2Fe-2S]-[ferredoxin] + 2 S-adenosyl-L-methionine = 2-methyladenosine(37) in tRNA + 5'-deoxyadenosine + L-methionine + 2 oxidized [2Fe-2S]-[ferredoxin] + S-adenosyl-L-homocysteine. Its function is as follows. Specifically methylates position 2 of adenine 2503 in 23S rRNA and position 2 of adenine 37 in tRNAs. This Thermotoga petrophila (strain ATCC BAA-488 / DSM 13995 / JCM 10881 / RKU-1) protein is Probable dual-specificity RNA methyltransferase RlmN.